Here is a 185-residue protein sequence, read N- to C-terminus: NADH-ubiquinone oxidoreductase chain 6 (185 aa).

The next 5 helical transmembrane spans lie at 4-24 (LTYYFIEITIFLAILCTIFII), 33-53 (ILYMIALFVIAAMYLYLIGLG), 54-74 (IFSLLYIMIYIGAIAVLFLFI), 94-114 (LPLVLISLIVLTISGLMIYSN), and 159-179 (AFILLVLAIVLLLGIIGPISI).

The protein belongs to the complex I subunit 6 family. As to quaternary structure, complex I is composed of 37 different subunits.

The protein localises to the mitochondrion membrane. The catalysed reaction is a ubiquinone + NADH + 5 H(+)(in) = a ubiquinol + NAD(+) + 4 H(+)(out). Core subunit of the mitochondrial membrane respiratory chain NADH dehydrogenase (Complex I) that is believed to belong to the minimal assembly required for catalysis. Complex I functions in the transfer of electrons from NADH to the respiratory chain. The immediate electron acceptor for the enzyme is believed to be ubiquinone. The polypeptide is NADH-ubiquinone oxidoreductase chain 6 (ND6) (Yarrowia lipolytica (strain CLIB 122 / E 150) (Yeast)).